The following is a 333-amino-acid chain: Flap endonuclease 1 (333 aa).

The tract at residues 1-99 is N-domain; that stretch reads MGVALREVLT…ETIESRREVR (99 aa). Residues Asp28, Asp81, Glu153, Glu155, Asp174, Asp176, and Asp235 each contribute to the Mg(2+) site. The I-domain stretch occupies residues 117 to 256; sequence EAYKQARASS…TALKIVKKDG (140 aa). The segment at 325 to 333 is interaction with PCNA; it reads GQKTLDRWF.

Belongs to the XPG/RAD2 endonuclease family. FEN1 subfamily. Interacts with PCNA. PCNA stimulates the nuclease activity without altering cleavage specificity. It depends on Mg(2+) as a cofactor.

Structure-specific nuclease with 5'-flap endonuclease and 5'-3' exonuclease activities involved in DNA replication and repair. During DNA replication, cleaves the 5'-overhanging flap structure that is generated by displacement synthesis when DNA polymerase encounters the 5'-end of a downstream Okazaki fragment. Binds the unpaired 3'-DNA end and kinks the DNA to facilitate 5' cleavage specificity. Cleaves one nucleotide into the double-stranded DNA from the junction in flap DNA, leaving a nick for ligation. Also involved in the base excision repair (BER) pathway. Acts as a genome stabilization factor that prevents flaps from equilibrating into structures that lead to duplications and deletions. Also possesses 5'-3' exonuclease activity on nicked or gapped double-stranded DNA. The protein is Flap endonuclease 1 of Methanosphaerula palustris (strain ATCC BAA-1556 / DSM 19958 / E1-9c).